The following is a 219-amino-acid chain: 7-cyano-7-deazaguanine synthase (219 aa).

Position 10 to 20 (10 to 20) interacts with ATP; it reads FSGGQDSTTCL. Residues C188, C197, C200, and C203 each coordinate Zn(2+).

The protein belongs to the QueC family. Zn(2+) is required as a cofactor.

The catalysed reaction is 7-carboxy-7-deazaguanine + NH4(+) + ATP = 7-cyano-7-deazaguanine + ADP + phosphate + H2O + H(+). The protein operates within purine metabolism; 7-cyano-7-deazaguanine biosynthesis. Its function is as follows. Catalyzes the ATP-dependent conversion of 7-carboxy-7-deazaguanine (CDG) to 7-cyano-7-deazaguanine (preQ(0)). This is 7-cyano-7-deazaguanine synthase from Bacteroides fragilis (strain ATCC 25285 / DSM 2151 / CCUG 4856 / JCM 11019 / LMG 10263 / NCTC 9343 / Onslow / VPI 2553 / EN-2).